Here is a 788-residue protein sequence, read N- to C-terminus: MEFDLNTEIAEVEEEENDDVGVGVGGGTRIDKGRLGISPSSSSSCSSGSSSSSSSTGSASSIYSELWHACAGPLTCLPKKGNVVVYFPQGHLEQDAMVSYSSPLEIPKFDLNPQIVCRVVNVQLLANKDTDEVYTQVTLLPLQEFSMLNGEGKEVKELGGEEERNGSSSVKRTPHMFCKTLTASDTSTHGGFSVPRRAAEDCFAPLDYKQQRPSQELIAKDLHGVEWKFRHIYRGQPRRHLLTTGWSIFVSQKNLVSGDAVLFLRDEGGELRLGIRRAARPRNGLPDSIIEKNSCSNILSLVANAVSTKSMFHVFYSPRATHAEFVIPYEKYITSIRSPVCIGTRFRMRFEMDDSPERRCAGVVTGVCDLDPYRWPNSKWRCLLVRWDESFVSDHQERVSPWEIDPSVSLPHLSIQSSPRPKRPWAGLLDTTPPGNPITKRGGFLDFEESVRPSKVLQGQENIGSASPSQGFDVMNRRILDFAMQSHANPVLVSSRVKDRFGEFVDATGVNPACSGVMDLDRFPRVLQGQEICSLKSFPQFAGFSPAAAPNPFAYQANKSSYYPLALHGIRSTHVPYQNPYNAGNQSSGPPSRAINFGEETRKFDAQNEGGLPNNVTADLPFKIDMMGKQKGSELNMNASSGCKLFGFSLPVETPASKPQSSSKRICTKVHKQGSQVGRAIDLSRLNGYDDLLMELERLFNMEGLLRDPEKGWRILYTDSENDMMVVGDDPWHDFCNVVWKIHLYTKEEVENANDDNKSCLEQAALMMEASKSSSVSQPDSSPTITRV.

Positions 1–19 (MEFDLNTEIAEVEEEENDD) are enriched in acidic residues. The tract at residues 1 to 53 (MEFDLNTEIAEVEEEENDDVGVGVGGGTRIDKGRLGISPSSSSSCSSGSSSSS) is disordered. The span at 38 to 53 (SPSSSSSCSSGSSSSS) shows a compositional bias: low complexity. Positions 177–279 (FCKTLTASDT…ELRLGIRRAA (103 aa)) form a DNA-binding region, TF-B3. Residues 413–433 (LSIQSSPRPKRPWAGLLDTTP) form a disordered region. In terms of domain architecture, PB1 spans 665–747 (RICTKVHKQG…VVWKIHLYTK (83 aa)).

Belongs to the ARF family. As to quaternary structure, homodimers and heterodimers. As to expression, expressed in the whole plant.

It is found in the nucleus. Its function is as follows. Auxin response factors (ARFs) are transcriptional factors that bind specifically to the DNA sequence 5'-TGTCTC-3' found in the auxin-responsive promoter elements (AuxREs). Could act as transcriptional activator or repressor. Formation of heterodimers with Aux/IAA proteins may alter their ability to modulate early auxin response genes expression. The chain is Auxin response factor 4 (ARF4) from Arabidopsis thaliana (Mouse-ear cress).